The sequence spans 527 residues: Phosphoenolpyruvate carboxykinase (ATP) (527 aa).

Substrate-binding residues include Arg-55, Tyr-191, and Lys-197. ATP contacts are provided by residues Lys-197, His-216, and Gly-232–Thr-240. Mn(2+)-binding residues include Lys-197 and His-216. Asp-253 lines the Mn(2+) pocket. 3 residues coordinate ATP: Glu-281, Arg-318, and Thr-443. A substrate-binding site is contributed by Arg-318.

It belongs to the phosphoenolpyruvate carboxykinase (ATP) family. Mn(2+) serves as cofactor.

The protein resides in the cytoplasm. The catalysed reaction is oxaloacetate + ATP = phosphoenolpyruvate + ADP + CO2. The protein operates within carbohydrate biosynthesis; gluconeogenesis. Its function is as follows. Involved in the gluconeogenesis. Catalyzes the conversion of oxaloacetate (OAA) to phosphoenolpyruvate (PEP) through direct phosphoryl transfer between the nucleoside triphosphate and OAA. This chain is Phosphoenolpyruvate carboxykinase (ATP), found in Brevibacillus brevis (strain 47 / JCM 6285 / NBRC 100599).